The sequence spans 395 residues: ATP phosphoribosyltransferase regulatory subunit (395 aa).

It belongs to the class-II aminoacyl-tRNA synthetase family. HisZ subfamily. As to quaternary structure, heteromultimer composed of HisG and HisZ subunits.

The protein localises to the cytoplasm. It participates in amino-acid biosynthesis; L-histidine biosynthesis; L-histidine from 5-phospho-alpha-D-ribose 1-diphosphate: step 1/9. Functionally, required for the first step of histidine biosynthesis. May allow the feedback regulation of ATP phosphoribosyltransferase activity by histidine. The polypeptide is ATP phosphoribosyltransferase regulatory subunit (Thioalkalivibrio sulfidiphilus (strain HL-EbGR7)).